A 114-amino-acid chain; its full sequence is SOSS complex subunit C homolog (114 aa).

Polar residues predominate over residues 1 to 10 (MAFQQHGNQE). The tract at residues 1 to 61 (MAFQQHGNQE…AGNTSASRIH (61 aa)) is disordered.

Belongs to the SOSS-C family.

This Nematostella vectensis (Starlet sea anemone) protein is SOSS complex subunit C homolog.